Reading from the N-terminus, the 376-residue chain is Alanine racemase (376 aa).

Lysine 40 acts as the Proton acceptor; specific for D-alanine in catalysis. N6-(pyridoxal phosphate)lysine is present on lysine 40. Position 138 (arginine 138) interacts with substrate. Tyrosine 270 (proton acceptor; specific for L-alanine) is an active-site residue. Methionine 317 is a binding site for substrate.

It belongs to the alanine racemase family. Requires pyridoxal 5'-phosphate as cofactor.

It carries out the reaction L-alanine = D-alanine. The protein operates within amino-acid biosynthesis; D-alanine biosynthesis; D-alanine from L-alanine: step 1/1. Functionally, catalyzes the interconversion of L-alanine and D-alanine. May also act on other amino acids. In Lactobacillus acidophilus (strain ATCC 700396 / NCK56 / N2 / NCFM), this protein is Alanine racemase (alr).